The primary structure comprises 130 residues: Cytochrome c-type biogenesis protein CcmE (130 aa).

At 1–7 (MKKKHKR) the chain is on the cytoplasmic side. The chain crosses the membrane as a helical; Signal-anchor for type II membrane protein span at residues 8–28 (LLITSGIFCFLSCAVFFILTT). Residues 29–130 (LKENISFFYT…DENYMPKVLK (102 aa)) are Extracellular-facing. Residues His-120 and Tyr-124 each coordinate heme.

The protein belongs to the CcmE/CycJ family.

The protein resides in the cell membrane. Heme chaperone required for the biogenesis of c-type cytochromes. Transiently binds heme delivered by CcmC and transfers the heme to apo-cytochromes in a process facilitated by CcmF and CcmH. The polypeptide is Cytochrome c-type biogenesis protein CcmE (Wolbachia pipientis wMel).